The sequence spans 144 residues: Acidic phospholipase A2 S15-109 (144 aa).

The N-terminal stretch at 1–19 (MYPAHLLVLLAVCVSLLGA) is a signal peptide. A propeptide spanning residues 20-27 (SDIPPQPL) is cleaved from the precursor. Disulfide bonds link Cys-38-Cys-98, Cys-54-Cys-143, Cys-56-Cys-72, Cys-71-Cys-126, Cys-78-Cys-119, Cys-87-Cys-112, and Cys-105-Cys-117. Ca(2+) contacts are provided by Tyr-55, Gly-57, and Gly-59. Residue His-75 is part of the active site. A Ca(2+)-binding site is contributed by Asp-76. Asp-120 is an active-site residue.

Belongs to the phospholipase A2 family. Group I subfamily. D49 sub-subfamily. The cofactor is Ca(2+). As to expression, expressed by the venom gland.

The protein localises to the secreted. The enzyme catalyses a 1,2-diacyl-sn-glycero-3-phosphocholine + H2O = a 1-acyl-sn-glycero-3-phosphocholine + a fatty acid + H(+). Its function is as follows. Snake venom phospholipase A2 (PLA2) that inhibits collagen-induced platelet aggregation. PLA2 catalyzes the calcium-dependent hydrolysis of the 2-acyl groups in 3-sn-phosphoglycerides. This Austrelaps superbus (Lowland copperhead snake) protein is Acidic phospholipase A2 S15-109.